A 224-amino-acid polypeptide reads, in one-letter code: Ribonuclease 3 (224 aa).

Positions 5–127 (ANRLQRRLGY…IIGAIYLDSD (123 aa)) constitute an RNase III domain. Position 40 (E40) interacts with Mg(2+). Residue D44 is part of the active site. D113 and E116 together coordinate Mg(2+). Residue E116 is part of the active site. The DRBM domain occupies 154–224 (DPKTRLQECL…AELALKQLES (71 aa)).

This sequence belongs to the ribonuclease III family. As to quaternary structure, homodimer. The cofactor is Mg(2+).

It is found in the cytoplasm. The enzyme catalyses Endonucleolytic cleavage to 5'-phosphomonoester.. In terms of biological role, digests double-stranded RNA. Involved in the processing of primary rRNA transcript to yield the immediate precursors to the large and small rRNAs (23S and 16S). Processes some mRNAs, and tRNAs when they are encoded in the rRNA operon. Processes pre-crRNA and tracrRNA of type II CRISPR loci if present in the organism. The sequence is that of Ribonuclease 3 from Photobacterium profundum (strain SS9).